The following is a 430-amino-acid chain: Adenylosuccinate synthetase (430 aa).

Residues 12–18 and 40–42 contribute to the GTP site; these read GDEGKGK and GHT. Catalysis depends on Asp13, which acts as the Proton acceptor. The Mg(2+) site is built by Asp13 and Gly40. Residues 13–16, 38–41, Thr128, Arg142, Gln223, Thr238, and Arg302 each bind IMP; these read DEGK and NAGH. His41 serves as the catalytic Proton donor. 298 to 304 provides a ligand contact to substrate; it reads TTTGRPR. Residues Arg304, 330–332, and 412–414 contribute to the GTP site; these read SID and SVG.

Belongs to the adenylosuccinate synthetase family. As to quaternary structure, homodimer. Mg(2+) serves as cofactor.

It localises to the cytoplasm. It carries out the reaction IMP + L-aspartate + GTP = N(6)-(1,2-dicarboxyethyl)-AMP + GDP + phosphate + 2 H(+). The protein operates within purine metabolism; AMP biosynthesis via de novo pathway; AMP from IMP: step 1/2. Its function is as follows. Plays an important role in the de novo pathway of purine nucleotide biosynthesis. Catalyzes the first committed step in the biosynthesis of AMP from IMP. This is Adenylosuccinate synthetase from Streptococcus pyogenes serotype M3 (strain ATCC BAA-595 / MGAS315).